Reading from the N-terminus, the 329-residue chain is DNA-directed RNA polymerase subunit alpha (329 aa).

The alpha N-terminal domain (alpha-NTD) stretch occupies residues 1–234 (MQGSVTEFLR…EQLDAFVELR (234 aa)). The interval 248–329 (FDPILLRPVD…WPPASLVDDL (82 aa)) is alpha C-terminal domain (alpha-CTD).

Belongs to the RNA polymerase alpha chain family. In terms of assembly, homodimer. The RNAP catalytic core consists of 2 alpha, 1 beta, 1 beta' and 1 omega subunit. When a sigma factor is associated with the core the holoenzyme is formed, which can initiate transcription.

The enzyme catalyses RNA(n) + a ribonucleoside 5'-triphosphate = RNA(n+1) + diphosphate. DNA-dependent RNA polymerase catalyzes the transcription of DNA into RNA using the four ribonucleoside triphosphates as substrates. The chain is DNA-directed RNA polymerase subunit alpha from Shewanella violacea (strain JCM 10179 / CIP 106290 / LMG 19151 / DSS12).